The sequence spans 653 residues: Macrolide export ATP-binding/permease protein MacB (653 aa).

One can recognise an ABC transporter domain in the interval 6-244 (LQLTRVTRRF…DAAPDASGGA (239 aa)). 42–49 (GASGSGKS) contacts ATP. A run of 4 helical transmembrane segments spans residues 278-298 (LLTM…VAIG), 526-546 (LTLL…IGVM), 587-607 (MGGA…SLFV), and 616-636 (AASI…FGFM).

It belongs to the ABC transporter superfamily. Macrolide exporter (TC 3.A.1.122) family. As to quaternary structure, homodimer.

The protein resides in the cell inner membrane. Non-canonical ABC transporter that contains transmembrane domains (TMD), which form a pore in the inner membrane, and an ATP-binding domain (NBD), which is responsible for energy generation. Confers resistance against macrolides. This is Macrolide export ATP-binding/permease protein MacB from Burkholderia pseudomallei (strain 1710b).